The sequence spans 288 residues: MEIIMQTAQYIIELLKAVFLGIVEGITEWLPISSTGHLILVNEFLNLRQSKDFIDMFNIVMHLGAILAVMVIYFKRLNPFQPGKTAREVQLTWKLWLKVVIACIPSAFFGLLLDDWMEAHLSNFFVVAIMLVVYGIAFIWIEDRNRRVDPKVTDLARMSYKTAFYIGLFQVLSIIPGTSRSGATILGGIIVGTSRSVAADFTFFLGIPTMFGYSGLKAVKYFIDGNTLTGGQAAILLVASVTAFLVSLFVIRFLMNYIKKHDFTVFGKYRIVLGIIVLFYGAVKLIFG.

8 consecutive transmembrane segments (helical) span residues 25–45 (GITE…NEFL), 53–73 (FIDM…MVIY), 93–113 (WKLW…GLLL), 121–141 (LSNF…FIWI), 171–191 (VLSI…GIIV), 196–216 (SVAA…YSGL), 231–251 (GQAA…LFVI), and 263–283 (FTVF…YGAV).

This sequence belongs to the UppP family.

Its subcellular location is the cell membrane. The enzyme catalyses di-trans,octa-cis-undecaprenyl diphosphate + H2O = di-trans,octa-cis-undecaprenyl phosphate + phosphate + H(+). Catalyzes the dephosphorylation of undecaprenyl diphosphate (UPP). Confers resistance to bacitracin. The sequence is that of Undecaprenyl-diphosphatase from Streptococcus thermophilus (strain CNRZ 1066).